A 516-amino-acid polypeptide reads, in one-letter code: Calcium and calcium/calmodulin-dependent serine/threonine-protein kinase (516 aa).

The Protein kinase domain occupies 13 to 298 (YEVVDVLGRG…ASDLLRHPWV (286 aa)). Residues 19–27 (LGRGGFSIV) and K43 each bind ATP. D163 serves as the catalytic Proton acceptor. A Phosphothreonine modification is found at T263. A calmodulin-binding region spans residues 321 to 334 (ARRKLRAAAIASVL). The stretch at 343-363 (KRLRNLLGTHDLTSEELDNLR) forms a coiled coil. EF-hand domains lie at 392-427 (SLIPLAPRVFDLFDNNRDGTVDMREILCGFSSLRNS), 428-463 (RGDDALRLCFQMYDADRSGCISKEELASMLRALPEE), and 470-505 (TEPGKLDEVFDQMDADSDGKVTFDEFKAAMNKDSAL). 15 residues coordinate Ca(2+): D405, N407, D409, T411, E416, D441, D443, S445, C447, E452, D483, D485, D487, K489, and E494.

The protein belongs to the protein kinase superfamily. CAMK Ser/Thr protein kinase family. CaMK subfamily. Autophosphorylation. As to expression, mainly expressed in roots and panicles. Detected in leaves, shoots and culms.

The protein resides in the nucleus. Its subcellular location is the cytoplasm. It is found in the cell membrane. The catalysed reaction is L-seryl-[protein] + ATP = O-phospho-L-seryl-[protein] + ADP + H(+). It carries out the reaction L-threonyl-[protein] + ATP = O-phospho-L-threonyl-[protein] + ADP + H(+). In terms of biological role, calcium- and calmodulin-dependent protein kinase required for arbuscular mycorrhizal (AM) symbiosis. Involved in response to water deprivation stress. Required for abscisic acid-induced antioxidant defense and oxidative stress tolerance during dehydration stress. Functions upstream of MPK1 in an abscisic acid signaling pathway that regulates the activities of antioxidant enzymes and the production of hydrogen peroxide. This chain is Calcium and calcium/calmodulin-dependent serine/threonine-protein kinase (CCAMK), found in Oryza sativa subsp. japonica (Rice).